We begin with the raw amino-acid sequence, 320 residues long: ATP-dependent 6-phosphofructokinase isozyme 1 (320 aa).

Position 12 (Gly12) interacts with ATP. ADP contacts are provided by residues Arg22–Arg26 and Arg55–Asp60. Residues Arg73–Phe74 and Gly103–Ser106 contribute to the ATP site. Asp104 provides a ligand contact to Mg(2+). Thr126–Asp128 provides a ligand contact to substrate. Catalysis depends on Asp128, which acts as the Proton acceptor. Arg155 provides a ligand contact to ADP. Residues Arg163 and Met170–Arg172 each bind substrate. ADP-binding positions include Gly186–Glu188, Lys212, and Lys214–His216. Residues Glu223, Arg244, and His250–Arg253 each bind substrate.

It belongs to the phosphofructokinase type A (PFKA) family. ATP-dependent PFK group I subfamily. Prokaryotic clade 'B1' sub-subfamily. Homotetramer. Requires Mg(2+) as cofactor.

The protein resides in the cytoplasm. The catalysed reaction is beta-D-fructose 6-phosphate + ATP = beta-D-fructose 1,6-bisphosphate + ADP + H(+). Its pathway is carbohydrate degradation; glycolysis; D-glyceraldehyde 3-phosphate and glycerone phosphate from D-glucose: step 3/4. Allosterically activated by ADP and other diphosphonucleosides, and allosterically inhibited by phosphoenolpyruvate. Functionally, catalyzes the phosphorylation of D-fructose 6-phosphate to fructose 1,6-bisphosphate by ATP, the first committing step of glycolysis. The sequence is that of ATP-dependent 6-phosphofructokinase isozyme 1 from Escherichia coli O6:H1 (strain CFT073 / ATCC 700928 / UPEC).